The primary structure comprises 1161 residues: Nuclear pore complex-interacting protein family member B11 (1161 aa).

The helical transmembrane segment at 63-87 (IIIAFPTSYKVVITLWIVYLWVSLL) threads the bilayer. Disordered regions lie at residues 278 to 580 (ADDN…DDNI) and 892 to 1161 (SADD…RRLS). Pro residues predominate over residues 311 to 321 (PLPPSAPPSAP). Composition is skewed to basic and acidic residues over residues 368-378 (DNIKTTAERLR), 410-420 (DNIKTPAEHLR), 452-462 (DNIKTPAERLR), 494-504 (DNIKTPAEHLR), 536-546 (DNIKTTAEHLR), 918-928 (DNIKTPAERLR), 960-970 (DNIKTPAERLR), 1002-1012 (DNIKTPAERLR), and 1044-1054 (DNIKTPAERLR).

Belongs to the NPIP family.

Its subcellular location is the membrane. This is Nuclear pore complex-interacting protein family member B11 (NPIPB11) from Homo sapiens (Human).